The chain runs to 534 residues: Arginine transporter 1 (534 aa).

Helical transmembrane passes span 35–55, 99–119, 126–146, 154–174, 182–202, and 216–236; these read YVLL…YFGW, SLFT…GYLL, AVAL…AFSG, PAFV…LLIV, ALIM…PLVL, and VCIG…FFFI. The N-linked (GlcNAc...) asparagine glycan is linked to asparagine 246. Positions 261–302 are disordered; the sequence is TAQSSPKAVDSPPCDEGASSRGRLAVSHNTERTAPDDEQEKD. The span at 289-302 shows a compositional bias: basic and acidic residues; the sequence is NTERTAPDDEQEKD. Transmembrane regions (helical) follow at residues 329 to 349, 365 to 385, 388 to 408, 419 to 439, 451 to 471, and 483 to 503; these read AFTF…WVMA, YTLE…GVVI, IGIM…YVCV, FSVI…YVFV, LIGV…VLYG, and RPVV…LLAM.

It belongs to the SLC43A transporter (TC 2.A.1.44) family.

Its subcellular location is the cell membrane. The catalysed reaction is L-arginine(in) = L-arginine(out). Functionally, selective L-arginine transporter that is essential for parasite survival and virulence. Does not require other inorganic ions such as sodium, chloride, potassium or calcium. The sequence is that of Arginine transporter 1 from Toxoplasma gondii (strain ATCC 50611 / Me49).